Reading from the N-terminus, the 428-residue chain is Gamma-glutamyl phosphate reductase (428 aa).

The protein belongs to the gamma-glutamyl phosphate reductase family.

Its subcellular location is the cytoplasm. It carries out the reaction L-glutamate 5-semialdehyde + phosphate + NADP(+) = L-glutamyl 5-phosphate + NADPH + H(+). It functions in the pathway amino-acid biosynthesis; L-proline biosynthesis; L-glutamate 5-semialdehyde from L-glutamate: step 2/2. Its function is as follows. Catalyzes the NADPH-dependent reduction of L-glutamate 5-phosphate into L-glutamate 5-semialdehyde and phosphate. The product spontaneously undergoes cyclization to form 1-pyrroline-5-carboxylate. The sequence is that of Gamma-glutamyl phosphate reductase from Picosynechococcus sp. (strain ATCC 27264 / PCC 7002 / PR-6) (Agmenellum quadruplicatum).